The following is a 221-amino-acid chain: Zingipain-2 (221 aa).

Intrachain disulfides connect Cys24–Cys65 and Cys58–Cys98. Cys27 is a catalytic residue. Asn99 and Asn156 each carry an N-linked (GlcNAc...) asparagine glycan. Cysteines 155 and 206 form a disulfide. His161 is an active-site residue.

It belongs to the peptidase C1 family.

It catalyses the reaction Preferential cleavage of peptides with a proline residue at the P2 position.. Its function is as follows. Cysteine proteinase with a specific activity toward peptides with a proline residue at the P2 position. This chain is Zingipain-2, found in Zingiber officinale (Ginger).